Reading from the N-terminus, the 39-residue chain is Photosystem II reaction center protein Y (39 aa).

A helical membrane pass occupies residues 5 to 23 (VLVVVGPLLIAASWAVFNI).

Belongs to the PsbY family. In terms of assembly, PSII is composed of 1 copy each of membrane proteins PsbA, PsbB, PsbC, PsbD, PsbE, PsbF, PsbH, PsbI, PsbJ, PsbK, PsbL, PsbM, PsbT, PsbX, PsbY, PsbZ, Psb30/Ycf12, peripheral proteins PsbO, CyanoQ (PsbQ), PsbU, PsbV and a large number of cofactors. It forms dimeric complexes.

Its subcellular location is the cellular thylakoid membrane. Its function is as follows. Loosely associated component of the core of photosystem II (PSII), it is not always seen in crystals. PSII is a light-driven water plastoquinone oxidoreductase, using light energy to abstract electrons from H(2)O, generating a proton gradient subsequently used for ATP formation. In Rippkaea orientalis (strain PCC 8801 / RF-1) (Cyanothece sp. (strain PCC 8801)), this protein is Photosystem II reaction center protein Y.